The primary structure comprises 266 residues: tRNA pseudouridine synthase A (266 aa).

Catalysis depends on aspartate 53, which acts as the Nucleophile. A substrate-binding site is contributed by tyrosine 109.

It belongs to the tRNA pseudouridine synthase TruA family.

It catalyses the reaction uridine(38/39/40) in tRNA = pseudouridine(38/39/40) in tRNA. In terms of biological role, formation of pseudouridine at positions 38, 39 and 40 in the anticodon stem and loop of transfer RNAs. In Methanocella arvoryzae (strain DSM 22066 / NBRC 105507 / MRE50), this protein is tRNA pseudouridine synthase A.